The primary structure comprises 203 residues: uncharacterized protein (203 aa).

Residues 1–20 (MDELILPILILLFLVFVAYF) form the signal peptide.

This is an uncharacterized protein from Pasteurella multocida (strain Pm70).